The following is a 309-amino-acid chain: Glutaminase (309 aa).

Substrate is bound by residues Ser64, Asn114, Glu160, Asn167, Tyr191, Tyr243, and Val261.

The protein belongs to the glutaminase family. In terms of assembly, homotetramer.

The catalysed reaction is L-glutamine + H2O = L-glutamate + NH4(+). This is Glutaminase from Agrobacterium fabrum (strain C58 / ATCC 33970) (Agrobacterium tumefaciens (strain C58)).